Reading from the N-terminus, the 115-residue chain is MLKDTIKSGDWKGEKHVPVIEYEKEGDLVKVEVSVGKEIPHPNTPEHHIAWIELYFHPEDGQFPILVGRVAFTSHDDPLTEPRAVFFFKTKKKGKLYALSYCNIHGLWENEVQLE.

Fe cation-binding residues include E14, H16, H41, H47, C102, and H105.

The protein belongs to the desulfoferrodoxin family. In terms of assembly, homotetramer. The cofactor is Fe cation.

It catalyses the reaction reduced [rubredoxin] + superoxide + 2 H(+) = oxidized [rubredoxin] + H2O2. Functionally, uses electrons from reduced NADP, by way of rubredoxin and an oxidoreductase, to catalyze the reduction of superoxide to hydrogen peroxide. This chain is Superoxide reductase (sorA), found in Pyrococcus abyssi (strain GE5 / Orsay).